The following is a 102-amino-acid chain: Small ribosomal subunit protein uS10 (102 aa).

The protein belongs to the universal ribosomal protein uS10 family. In terms of assembly, part of the 30S ribosomal subunit.

Functionally, involved in the binding of tRNA to the ribosomes. This chain is Small ribosomal subunit protein uS10, found in Bifidobacterium longum (strain DJO10A).